The primary structure comprises 917 residues: MSDGNERNQDGNNTPSQGGEQTRSSRLSLRPAGRQEVGRTVDAGSVRQSFSHGRSKVVQVEVRKPKRNAAGPGAGAAARGGRAGGRALTAAELAARQRALELQRKAAAEEAARREEEKIQIMSAAEAARRAAEEERLISEQKAAEIAALKESEQQAAREQAAAEAAARAAEQAAAEAAAREAEEAARSAPLDPRSHSTGGVQLAAPVQRLRPLAERAIMPPRPVQPSRPAAAAPARNNETLHLRSGAAAGGDDERRPAPRRSGPGAPPAPPRRPSAPSRKGGGSDRRSGRIDVRAAIEGDDDKTRSLASVRRQRDRERRQAELERLRSDQVRVVRDVIVPETITVAELANRMAARQGEVIKALMKMGVMATAAQSIDGDTAELVVEEFGHRIKRVSESDVEIGIEGVEDNADDLKPRAPVVTVMGHVDHGKTSLLDALRTTDVAASEAGGITQHIGAYQITAPSGKKITFIDTPGHEAFTSMRARGASVTDIVVLVVAADDGVMPQTIEAIKHAKAANAPIIVAINKIDKPGANPNRVRQELLNHEIVVEEMGGDTQDVEVSALKRIGLDKLEECILLQSEMLDLKANPDRVAEGVVIESRLDRGRGPVAALLVQKGTLRRGDIVVAGAEWGRVRAVLDDRGRQVKEAGPSMPVEVLGLTGVPGAGEPFVVVENDARAREISEFRQRKIKEKEAASQVAARGTLDQMLARIQAGVQKEVALLIKADVQGSAEAISTTVQKLAHEEVAVRVLNASVGQITESDIQLAKASDAIIVAFNVRATTQARELAQREGVDIRYYSIIYQVADDVEQLVKGKVAPKHREKFLGYAEVRQVFNITKTGKVAGCYVTEGLVKRGCGVRLLRDNVVIHEGELSQLKRFKDDVKEVARGYECGLSFAGYNDLREGDMVECYEMEVIPA.

2 disordered regions span residues Met-1–Gly-84 and Lys-150–Arg-318. Over residues Asp-10 to Leu-27 the composition is skewed to polar residues. Low complexity-rich tracts occupy residues Ala-69–Gly-84, Gln-154–Ala-177, and Ser-227–Arg-236. Positions Gly-265–Pro-274 are enriched in pro residues. Residues Gly-282–Arg-305 are compositionally biased toward basic and acidic residues. One can recognise a tr-type G domain in the interval Pro-416 to Lys-586. The G1 stretch occupies residues Gly-425–Thr-432. Gly-425–Thr-432 contacts GTP. Residues Gly-450–His-454 form a G2 region. A G3 region spans residues Asp-472 to Gly-475. GTP contacts are provided by residues Asp-472–His-476 and Asn-526–Asp-529. The G4 stretch occupies residues Asn-526–Asp-529. Residues Ser-562 to Leu-564 are G5.

Belongs to the TRAFAC class translation factor GTPase superfamily. Classic translation factor GTPase family. IF-2 subfamily.

Its subcellular location is the cytoplasm. Functionally, one of the essential components for the initiation of protein synthesis. Protects formylmethionyl-tRNA from spontaneous hydrolysis and promotes its binding to the 30S ribosomal subunits. Also involved in the hydrolysis of GTP during the formation of the 70S ribosomal complex. This chain is Translation initiation factor IF-2, found in Gluconobacter oxydans (strain 621H) (Gluconobacter suboxydans).